The following is a 254-amino-acid chain: Persulfide dioxygenase ETHE1, mitochondrial (254 aa).

Residues 1–7 (MAEAVLR) constitute a mitochondrion transit peptide. Phosphoserine is present on residues S14 and S19. An N6-acetyllysine modification is found at K66. The Fe cation site is built by H79, H135, and D154. N6-acetyllysine; alternate is present on K172. K172 carries the N6-succinyllysine; alternate modification.

This sequence belongs to the metallo-beta-lactamase superfamily. Glyoxalase II family. Homodimer. Monomer. Interacts with TST. May interact with RELA. The cofactor is Fe(2+). As to expression, ubiquitously expressed.

It localises to the cytoplasm. The protein resides in the nucleus. Its subcellular location is the mitochondrion matrix. The enzyme catalyses S-sulfanylglutathione + O2 + H2O = sulfite + glutathione + 2 H(+). Glutathione increases enzyme activity. Functionally, sulfur dioxygenase that plays an essential role in hydrogen sulfide catabolism in the mitochondrial matrix. Hydrogen sulfide (H(2)S) is first oxidized by SQRDL, giving rise to cysteine persulfide residues. ETHE1 consumes molecular oxygen to catalyze the oxidation of the persulfide, once it has been transferred to a thiophilic acceptor, such as glutathione (R-SSH). Plays an important role in metabolic homeostasis in mitochondria by metabolizing hydrogen sulfide and preventing the accumulation of supraphysiological H(2)S levels that have toxic effects, due to the inhibition of cytochrome c oxidase. First described as a protein that can shuttle between the nucleus and the cytoplasm and suppress p53-induced apoptosis by sequestering the transcription factor RELA/NFKB3 in the cytoplasm and preventing its accumulation in the nucleus. The chain is Persulfide dioxygenase ETHE1, mitochondrial (ETHE1) from Homo sapiens (Human).